Reading from the N-terminus, the 366-residue chain is Chalcone synthase B (366 aa).

Residue cysteine 172 is part of the active site.

This sequence belongs to the thiolase-like superfamily. Chalcone/stilbene synthases family.

The catalysed reaction is (E)-4-coumaroyl-CoA + 3 malonyl-CoA + 3 H(+) = 2',4,4',6'-tetrahydroxychalcone + 3 CO2 + 4 CoA. It participates in secondary metabolite biosynthesis; flavonoid biosynthesis. Its function is as follows. The primary product of this enzyme is 4,2',4',6'-tetrahydroxychalcone (also termed naringenin-chalcone or chalcone) which can under specific conditions spontaneously isomerize into naringenin. This Ipomoea trifida (Morning glory) protein is Chalcone synthase B (CHSB).